The following is an 802-amino-acid chain: Copper-exporting P-type ATPase (802 aa).

HMA domains lie at 5-70 (KKTT…YGVA) and 72-138 (ETVE…YDAS). Cu(+)-binding residues include Cys16, Cys19, Cys83, and Cys86. 6 helical membrane passes run 161-181 (LIISAVLSLPLLMLMFVHLFN), 192-212 (WFQFILATPVQFIIGWQFYVG), 224-244 (MDVLVAVGTSAAYFYSIYEMV), 256-276 (LYFETSAVLITLILFGKYLEA), 411-431 (YFVPIVVGIALLTFIVWITLV), and 438-458 (PALVASISVLVIACPCALGLA). Asp495 (4-aspartylphosphate intermediate) is an active-site residue. Positions 690 and 694 each coordinate Mg(2+). A run of 2 helical transmembrane segments spans residues 748–767 (LFWAFGYNIAGIPIAALGLL) and 771–790 (VAGAAMALSSVSVVTNALRL).

The protein belongs to the cation transport ATPase (P-type) (TC 3.A.3) family. Type IB subfamily.

Its subcellular location is the cell membrane. It catalyses the reaction Cu(+)(in) + ATP + H2O = Cu(+)(out) + ADP + phosphate + H(+). Involved in copper export. In Staphylococcus aureus (strain MW2), this protein is Copper-exporting P-type ATPase (copA).